Reading from the N-terminus, the 855-residue chain is Leucine--tRNA ligase (855 aa).

The 'HIGH' region motif lies at 45-55; it reads PYPSGRLHMGH. The 'KMSKS' region motif lies at 619 to 623; that stretch reads KMSKS. K622 lines the ATP pocket.

The protein belongs to the class-I aminoacyl-tRNA synthetase family.

It localises to the cytoplasm. It catalyses the reaction tRNA(Leu) + L-leucine + ATP = L-leucyl-tRNA(Leu) + AMP + diphosphate. This Hyphomonas neptunium (strain ATCC 15444) protein is Leucine--tRNA ligase.